A 262-amino-acid chain; its full sequence is Hydroxyethylthiazole kinase (262 aa).

Position 50 (Met50) interacts with substrate. ATP contacts are provided by Arg125 and Thr171. Gly198 serves as a coordination point for substrate.

The protein belongs to the Thz kinase family. Mg(2+) serves as cofactor.

It catalyses the reaction 5-(2-hydroxyethyl)-4-methylthiazole + ATP = 4-methyl-5-(2-phosphooxyethyl)-thiazole + ADP + H(+). Its pathway is cofactor biosynthesis; thiamine diphosphate biosynthesis; 4-methyl-5-(2-phosphoethyl)-thiazole from 5-(2-hydroxyethyl)-4-methylthiazole: step 1/1. Its function is as follows. Catalyzes the phosphorylation of the hydroxyl group of 4-methyl-5-beta-hydroxyethylthiazole (THZ). The chain is Hydroxyethylthiazole kinase from Escherichia coli O6:H1 (strain CFT073 / ATCC 700928 / UPEC).